Consider the following 1361-residue polypeptide: DNA-directed RNA polymerase subunit beta'' (1361 aa).

Zn(2+) contacts are provided by C224, C295, C302, and C305.

This sequence belongs to the RNA polymerase beta' chain family. RpoC2 subfamily. In terms of assembly, in plastids the minimal PEP RNA polymerase catalytic core is composed of four subunits: alpha, beta, beta', and beta''. When a (nuclear-encoded) sigma factor is associated with the core the holoenzyme is formed, which can initiate transcription. Zn(2+) is required as a cofactor.

The protein resides in the plastid. The protein localises to the chloroplast. The enzyme catalyses RNA(n) + a ribonucleoside 5'-triphosphate = RNA(n+1) + diphosphate. Its function is as follows. DNA-dependent RNA polymerase catalyzes the transcription of DNA into RNA using the four ribonucleoside triphosphates as substrates. This is DNA-directed RNA polymerase subunit beta'' from Spinacia oleracea (Spinach).